The chain runs to 470 residues: Maltose fermentation regulatory protein YPR196W (470 aa).

Positions 8 to 34 (CDCCRVRRVKCDRNRPCDRCRQRNLRC) form a DNA-binding region, zn(2)-C6 fungal-type. A Nuclear localization signal motif is present at residues 41-49 (RKRGPKSIG).

It belongs to the MAL13 family.

The protein resides in the nucleus. In terms of biological role, may regulate the transcription of maltase and maltose permease genes. In Saccharomyces cerevisiae (strain ATCC 204508 / S288c) (Baker's yeast), this protein is Maltose fermentation regulatory protein YPR196W.